Reading from the N-terminus, the 444-residue chain is UDP-N-acetylmuramate--L-alanine ligase (444 aa).

An ATP-binding site is contributed by Gly-110 to Ser-116.

This sequence belongs to the MurCDEF family.

Its subcellular location is the cytoplasm. It carries out the reaction UDP-N-acetyl-alpha-D-muramate + L-alanine + ATP = UDP-N-acetyl-alpha-D-muramoyl-L-alanine + ADP + phosphate + H(+). It participates in cell wall biogenesis; peptidoglycan biosynthesis. Its function is as follows. Cell wall formation. The protein is UDP-N-acetylmuramate--L-alanine ligase of Streptococcus pneumoniae (strain ATCC 700669 / Spain 23F-1).